A 444-amino-acid chain; its full sequence is Cell division cycle 20.4, cofactor of APC complex (444 aa).

The span at 88–99 (LLSTNHSDSPHQ) shows a compositional bias: polar residues. The tract at residues 88–108 (LLSTNHSDSPHQNPKPVKPRR) is disordered. 7 WD repeats span residues 124-161 (RDDF…TSEL), 166-205 (EDKG…QVRT), 209-246 (GHES…SIVE), 250-289 (GHTE…SKQT), 298-340 (EHTA…CLNS), 342-383 (ETGS…KMAE), and 386-425 (GHTS…PKTT).

Belongs to the WD repeat CDC20/Fizzy family. The APC/C is composed of at least 11 subunits that stay tightly associated throughout the cell cycle.

It is found in the cytoplasm. It participates in protein modification; protein ubiquitination. In terms of biological role, component of the anaphase promoting complex/cyclosome (APC/C), a cell cycle-regulated E3 ubiquitin-protein ligase complex that controls progression through mitosis and the G1 phase of the cell cycle. The sequence is that of Cell division cycle 20.4, cofactor of APC complex (CDC20-4) from Arabidopsis thaliana (Mouse-ear cress).